Reading from the N-terminus, the 180-residue chain is MEVSHPAVHPVAVPPVLTEPPARVRMKDYQGMPGTLGGLALRLGQLGFAVLSFSIMVSTPDFSQVTAFCYLVAATVLQTLWSSITAVVDIYALSVRRSLHHSLLVGLFAVGDGVTSTLTFAAACATAGITVLIDNDLDECGQNHCGRFEAAAAMAFLSWIMAAPSFLLAFWSFGNKIVCF.

Topologically, residues 1 to 36 (MEVSHPAVHPVAVPPVLTEPPARVRMKDYQGMPGTL) are cytoplasmic. A helical transmembrane segment spans residues 37 to 57 (GGLALRLGQLGFAVLSFSIMV). The Extracellular portion of the chain corresponds to 58–67 (STPDFSQVTA). The chain crosses the membrane as a helical span at residues 68–88 (FCYLVAATVLQTLWSSITAVV). Residues 89–102 (DIYALSVRRSLHHS) lie on the Cytoplasmic side of the membrane. The helical transmembrane segment at 103-123 (LLVGLFAVGDGVTSTLTFAAA) threads the bilayer. The Extracellular portion of the chain corresponds to 124–150 (CATAGITVLIDNDLDECGQNHCGRFEA). Residues 151-171 (AAAMAFLSWIMAAPSFLLAFW) form a helical membrane-spanning segment. The Cytoplasmic segment spans residues 172–180 (SFGNKIVCF).

The protein belongs to the Casparian strip membrane proteins (CASP) family. In terms of assembly, homodimer and heterodimers.

It localises to the cell membrane. The polypeptide is CASP-like protein 5A1 (Pteridium aquilinum subsp. aquilinum (Bracken fern)).